The primary structure comprises 49 residues: Large ribosomal subunit protein bL33B (49 aa).

The protein belongs to the bacterial ribosomal protein bL33 family.

This chain is Large ribosomal subunit protein bL33B, found in Acholeplasma laidlawii (strain PG-8A).